The primary structure comprises 381 residues: Dual-specificity RNA methyltransferase RlmN (381 aa).

The Proton acceptor role is filled by Glu-96. In terms of domain architecture, Radical SAM core spans 102–342 (TDDRGTLCVS…TRTTRGDDID (241 aa)). Residues Cys-109 and Cys-345 are joined by a disulfide bond. Residues Cys-116, Cys-120, and Cys-123 each contribute to the [4Fe-4S] cluster site. Residues 170–171 (GE), Ser-202, 224–226 (SLH), and Asn-302 each bind S-adenosyl-L-methionine. Cys-345 functions as the S-methylcysteine intermediate in the catalytic mechanism.

It belongs to the radical SAM superfamily. RlmN family. [4Fe-4S] cluster serves as cofactor.

Its subcellular location is the cytoplasm. It catalyses the reaction adenosine(2503) in 23S rRNA + 2 reduced [2Fe-2S]-[ferredoxin] + 2 S-adenosyl-L-methionine = 2-methyladenosine(2503) in 23S rRNA + 5'-deoxyadenosine + L-methionine + 2 oxidized [2Fe-2S]-[ferredoxin] + S-adenosyl-L-homocysteine. It carries out the reaction adenosine(37) in tRNA + 2 reduced [2Fe-2S]-[ferredoxin] + 2 S-adenosyl-L-methionine = 2-methyladenosine(37) in tRNA + 5'-deoxyadenosine + L-methionine + 2 oxidized [2Fe-2S]-[ferredoxin] + S-adenosyl-L-homocysteine. In terms of biological role, specifically methylates position 2 of adenine 2503 in 23S rRNA and position 2 of adenine 37 in tRNAs. m2A2503 modification seems to play a crucial role in the proofreading step occurring at the peptidyl transferase center and thus would serve to optimize ribosomal fidelity. This is Dual-specificity RNA methyltransferase RlmN from Pseudomonas putida (strain ATCC 700007 / DSM 6899 / JCM 31910 / BCRC 17059 / LMG 24140 / F1).